A 149-amino-acid chain; its full sequence is Transcriptional repressor NrdR (149 aa).

A zinc finger spans residues 3–34 (CPFCSAVDTKVIDSRLVGEGSSVRRRRQCLVC). The region spanning 49–139 (PRVVKSNDVR…VYRSFEDIKE (91 aa)) is the ATP-cone domain.

The protein belongs to the NrdR family. The cofactor is Zn(2+).

In terms of biological role, negatively regulates transcription of bacterial ribonucleotide reductase nrd genes and operons by binding to NrdR-boxes. In Enterobacter sp. (strain 638), this protein is Transcriptional repressor NrdR.